We begin with the raw amino-acid sequence, 775 residues long: 1,4-alpha-glucan branching enzyme GlgB (775 aa).

Residue Asp431 is the Nucleophile of the active site. Residue Glu484 is the Proton donor of the active site.

It belongs to the glycosyl hydrolase 13 family. GlgB subfamily. Monomer.

The catalysed reaction is Transfers a segment of a (1-&gt;4)-alpha-D-glucan chain to a primary hydroxy group in a similar glucan chain.. The protein operates within glycan biosynthesis; glycogen biosynthesis. Catalyzes the formation of the alpha-1,6-glucosidic linkages in glycogen by scission of a 1,4-alpha-linked oligosaccharide from growing alpha-1,4-glucan chains and the subsequent attachment of the oligosaccharide to the alpha-1,6 position. The polypeptide is 1,4-alpha-glucan branching enzyme GlgB (Parasynechococcus marenigrum (strain WH8102)).